The sequence spans 65 residues: Large ribosomal subunit protein bL35 (65 aa).

This sequence belongs to the bacterial ribosomal protein bL35 family.

In Aeromonas hydrophila subsp. hydrophila (strain ATCC 7966 / DSM 30187 / BCRC 13018 / CCUG 14551 / JCM 1027 / KCTC 2358 / NCIMB 9240 / NCTC 8049), this protein is Large ribosomal subunit protein bL35.